The following is a 426-amino-acid chain: Glutamate-1-semialdehyde 2,1-aminomutase (426 aa).

K265 is modified (N6-(pyridoxal phosphate)lysine).

The protein belongs to the class-III pyridoxal-phosphate-dependent aminotransferase family. HemL subfamily. In terms of assembly, homodimer. Pyridoxal 5'-phosphate is required as a cofactor.

The protein localises to the cytoplasm. The enzyme catalyses (S)-4-amino-5-oxopentanoate = 5-aminolevulinate. The protein operates within porphyrin-containing compound metabolism; protoporphyrin-IX biosynthesis; 5-aminolevulinate from L-glutamyl-tRNA(Glu): step 2/2. The polypeptide is Glutamate-1-semialdehyde 2,1-aminomutase (Marinobacter nauticus (strain ATCC 700491 / DSM 11845 / VT8) (Marinobacter aquaeolei)).